A 187-amino-acid polypeptide reads, in one-letter code: Probable nicotinate-nucleotide adenylyltransferase (187 aa).

This sequence belongs to the NadD family.

It carries out the reaction nicotinate beta-D-ribonucleotide + ATP + H(+) = deamido-NAD(+) + diphosphate. Its pathway is cofactor biosynthesis; NAD(+) biosynthesis; deamido-NAD(+) from nicotinate D-ribonucleotide: step 1/1. Its function is as follows. Catalyzes the reversible adenylation of nicotinate mononucleotide (NaMN) to nicotinic acid adenine dinucleotide (NaAD). The chain is Probable nicotinate-nucleotide adenylyltransferase from Anaeromyxobacter sp. (strain K).